The following is a 457-amino-acid chain: Acetylcholine receptor subunit alpha (457 aa).

An N-terminal signal peptide occupies residues 1 to 20; it reads MELSTVLLLLGLCSAGLVLG. The Extracellular segment spans residues 21-230; the sequence is SEHETRLVAK…ITYHFVMQRL (210 aa). Disulfide bonds link Cys-148/Cys-162 and Cys-212/Cys-213. N-linked (GlcNAc...) asparagine glycosylation is present at Asn-161. Transmembrane regions (helical) follow at residues 231 to 255, 263 to 281, and 297 to 316; these read PLYF…VFYL, MTLS…LVIV, and YMLF…VIVI. The Cytoplasmic segment spans residues 317-428; sequence NTHHRSPSTH…WKYVAMVMDH (112 aa). The helical transmembrane segment at 429–447 threads the bilayer; it reads ILLGVFMLVCLIGTLAVFA.

Belongs to the ligand-gated ion channel (TC 1.A.9) family. Acetylcholine receptor (TC 1.A.9.1) subfamily. Alpha-1/CHRNA1 sub-subfamily. In terms of assembly, one of the alpha chains that assemble within the acetylcholine receptor, a pentamer of two alpha chains, a beta, a delta, and a gamma (in immature muscle) or epsilon (in mature muscle) chains. The muscle heteropentamer composed of alpha-1, beta-1, delta, epsilon subunits interacts with the alpha-conotoxin ImII.

Its subcellular location is the postsynaptic cell membrane. The protein localises to the cell membrane. The enzyme catalyses K(+)(in) = K(+)(out). It catalyses the reaction Na(+)(in) = Na(+)(out). Upon acetylcholine binding, the AChR responds by an extensive change in conformation that affects all subunits and leads to opening of an ion-conducting channel across the plasma membrane. The chain is Acetylcholine receptor subunit alpha (Chrna1) from Mus musculus (Mouse).